The chain runs to 156 residues: Small ribosomal subunit protein uS7 (156 aa).

The protein belongs to the universal ribosomal protein uS7 family. Part of the 30S ribosomal subunit. Contacts proteins S9 and S11.

Its function is as follows. One of the primary rRNA binding proteins, it binds directly to 16S rRNA where it nucleates assembly of the head domain of the 30S subunit. Is located at the subunit interface close to the decoding center, probably blocks exit of the E-site tRNA. This Sphingopyxis alaskensis (strain DSM 13593 / LMG 18877 / RB2256) (Sphingomonas alaskensis) protein is Small ribosomal subunit protein uS7.